Consider the following 170-residue polypeptide: MNLKDYIATIENYPKEGVTFRDISPLMADGNAYSYAVREIVQYATDKKIDMIVGPEARGFIVGCPVAFELGIGFAPVRKPGKLPREVISADYEKEYGVDTLTMHADAIKPGQRVLIVDDLLATGGTVKATIEMIERLGGVVAGCAFLIELDELKGREVIGDYDYKVLMHY.

The protein belongs to the purine/pyrimidine phosphoribosyltransferase family. Homodimer.

It localises to the cytoplasm. It catalyses the reaction AMP + diphosphate = 5-phospho-alpha-D-ribose 1-diphosphate + adenine. Its pathway is purine metabolism; AMP biosynthesis via salvage pathway; AMP from adenine: step 1/1. In terms of biological role, catalyzes a salvage reaction resulting in the formation of AMP, that is energically less costly than de novo synthesis. The protein is Adenine phosphoribosyltransferase of Streptococcus sanguinis (strain SK36).